Consider the following 412-residue polypeptide: Argininosuccinate synthase (412 aa).

10–18 (AYSGGLDTS) is an ATP binding site. L-citrulline is bound at residue Tyr-89. ATP is bound at residue Gly-119. Thr-121, Asn-125, and Asp-126 together coordinate L-aspartate. Asn-125 lines the L-citrulline pocket. 4 residues coordinate L-citrulline: Arg-129, Ser-177, Glu-261, and Tyr-273.

This sequence belongs to the argininosuccinate synthase family. Type 1 subfamily. As to quaternary structure, homotetramer.

It is found in the cytoplasm. The catalysed reaction is L-citrulline + L-aspartate + ATP = 2-(N(omega)-L-arginino)succinate + AMP + diphosphate + H(+). Its pathway is amino-acid biosynthesis; L-arginine biosynthesis; L-arginine from L-ornithine and carbamoyl phosphate: step 2/3. This Bifidobacterium longum subsp. infantis (strain ATCC 15697 / DSM 20088 / JCM 1222 / NCTC 11817 / S12) protein is Argininosuccinate synthase.